We begin with the raw amino-acid sequence, 450 residues long: UDP-N-acetylmuramoylalanine--D-glutamate ligase (450 aa).

Residue 119–125 (GSNGKTT) participates in ATP binding.

It belongs to the MurCDEF family.

It localises to the cytoplasm. It carries out the reaction UDP-N-acetyl-alpha-D-muramoyl-L-alanine + D-glutamate + ATP = UDP-N-acetyl-alpha-D-muramoyl-L-alanyl-D-glutamate + ADP + phosphate + H(+). The protein operates within cell wall biogenesis; peptidoglycan biosynthesis. Cell wall formation. Catalyzes the addition of glutamate to the nucleotide precursor UDP-N-acetylmuramoyl-L-alanine (UMA). The protein is UDP-N-acetylmuramoylalanine--D-glutamate ligase of Bacillus cereus (strain G9842).